A 155-amino-acid chain; its full sequence is Ribosomal RNA large subunit methyltransferase H (155 aa).

Residues Gly-104 and Phe-123 to Leu-128 each bind S-adenosyl-L-methionine.

Belongs to the RNA methyltransferase RlmH family. As to quaternary structure, homodimer.

Its subcellular location is the cytoplasm. It catalyses the reaction pseudouridine(1915) in 23S rRNA + S-adenosyl-L-methionine = N(3)-methylpseudouridine(1915) in 23S rRNA + S-adenosyl-L-homocysteine + H(+). Its function is as follows. Specifically methylates the pseudouridine at position 1915 (m3Psi1915) in 23S rRNA. This is Ribosomal RNA large subunit methyltransferase H from Mesoplasma florum (strain ATCC 33453 / NBRC 100688 / NCTC 11704 / L1) (Acholeplasma florum).